The following is a 292-amino-acid chain: NAD kinase (292 aa).

Aspartate 73 serves as the catalytic Proton acceptor. NAD(+) contacts are provided by residues 73-74 (DG), 147-148 (NE), histidine 158, arginine 175, aspartate 177, 188-193 (TAYSLS), and glutamine 247.

This sequence belongs to the NAD kinase family. Requires a divalent metal cation as cofactor.

Its subcellular location is the cytoplasm. It catalyses the reaction NAD(+) + ATP = ADP + NADP(+) + H(+). In terms of biological role, involved in the regulation of the intracellular balance of NAD and NADP, and is a key enzyme in the biosynthesis of NADP. Catalyzes specifically the phosphorylation on 2'-hydroxyl of the adenosine moiety of NAD to yield NADP. The polypeptide is NAD kinase (Salmonella dublin (strain CT_02021853)).